The chain runs to 358 residues: Probable G-protein coupled receptor 25 (358 aa).

At 1-43 (MQSTEPWSPSWGTLSWDYSGSGSLDQVELCPAWNLPYGHAIIP) the chain is on the extracellular side. Residues 44-64 (ALYLAAFAVGLPGNAFVVWLL) traverse the membrane as a helical segment. Residues 65–76 (SRQRGPRRLVDT) are Cytoplasmic-facing. A helical membrane pass occupies residues 77-97 (FVLHLAAADLGFVLTLPLWAA). At 98–113 (AEARGGLWPFGDGLCK) the chain is on the extracellular side. A disulfide bond links cysteine 112 and cysteine 191. A helical membrane pass occupies residues 114–134 (VSSFALAVTRCAGALLLAGMS). Residues 135–155 (VDRYLAVGRPLSARPLRSARC) are Cytoplasmic-facing. A helical membrane pass occupies residues 156-176 (VRAVCGAAWAAAFLAGLPALL). Residues 177-200 (YRGLQPSLDGVGSQCAEEPWEALQ) lie on the Extracellular side of the membrane. Residues 201–221 (GVGLLLLLLTFALPLAVTLIC) traverse the membrane as a helical segment. At 222 to 239 (YWRVSRRLPRVGRARSNS) the chain is on the cytoplasmic side. A helical membrane pass occupies residues 240–260 (LRIIFTVESVFVGCWLPFGVL). Residues 261–284 (RSLFHLARLQALPLPCSLLLALRW) are Extracellular-facing. The chain crosses the membrane as a helical span at residues 285-307 (GLTVTTCLAFVNSSANPVIYLLL). The Cytoplasmic segment spans residues 308–358 (DRSFRARARFGLCARAGRQVRRISSASSLSRDDSSVFRGRSPKVNSASATW). The tract at residues 339–358 (DDSSVFRGRSPKVNSASATW) is disordered.

This sequence belongs to the G-protein coupled receptor 1 family.

The protein resides in the membrane. Orphan receptor. The sequence is that of Probable G-protein coupled receptor 25 (Gpr25) from Mus musculus (Mouse).